The primary structure comprises 247 residues: Protein NipSnap homolog 3A (247 aa).

N6-acetyllysine occurs at positions 48 and 166.

This sequence belongs to the NipSnap family. In terms of assembly, interacts with the Salmonella typhimurium virulence protein spiC. Ubiquitous. Highly expressed in liver, kidney and muscle. Expressed at intermediate level in brain, heart, colon, thymus, kidney, small intestine, placenta, lung, leukocytes and spleen.

It is found in the cytoplasm. The protein localises to the cytosol. This Homo sapiens (Human) protein is Protein NipSnap homolog 3A (NIPSNAP3A).